The chain runs to 173 residues: MARMNRPAPVEVSYKNMRFLITHNPTNATLSSFIEDLKKYGATTVVRVCEVTYDKAPLEKDGITVVDWPFDDGAPPPGKVVEDWLSLLKNKFCDDPGSCVAVHCVAGLGRAPVLVALALIESGMKYEDAIQFIRQKRRGAINSKQLTYLEKYRPKQRLRFKDPHAHKTKCCIM.

A Tyrosine-protein phosphatase domain is found at 8–161; sequence APVEVSYKNM…YRPKQRLRFK (154 aa). The cysteines at positions 49 and 104 are disulfide-linked. Catalysis depends on aspartate 72, which acts as the Proton donor. Catalysis depends on cysteine 104, which acts as the Phosphocysteine intermediate. Substrate is bound at residue arginine 110. Cysteine 170 bears the Cysteine methyl ester mark. Cysteine 170 carries S-farnesyl cysteine lipidation. Residues 171–173 constitute a propeptide, removed in mature form; it reads CIM.

It belongs to the protein-tyrosine phosphatase family. As to quaternary structure, interacts with tubulin. Farnesylated. Farnesylation is required for membrane targeting. Unfarnesylated forms are shifted into the nucleus.

It localises to the cell membrane. The protein resides in the early endosome. The enzyme catalyses O-phospho-L-tyrosyl-[protein] + H2O = L-tyrosyl-[protein] + phosphate. Inhibited by sodium orthovanadate and peroxovanadium compounds, and by pentamidine. Functionally, protein tyrosine phosphatase which stimulates progression from G1 into S phase during mitosis. Enhances cell proliferation, cell motility and invasive activity, and promotes cancer metastasis. May be involved in the progression of cardiac hypertrophy by inhibiting intracellular calcium mobilization in response to angiotensin II. The sequence is that of Protein tyrosine phosphatase type IVA 3 (PTP4A3) from Bos taurus (Bovine).